The chain runs to 321 residues: MGTTTLAWNINNTAENGSYTEMFSCITKFNTLNFLTVIIAVVGLAGNGIVLWLLAFHLHRNAFSVYVLNLAGADFLYLFTQVVHSLECVLQLDNNSFYILLIVTMFAYLAGLCMIAAISAERCLSVMWPIWYHCQRPRHTSAIMCALVWVSSLLLSLVVGLGCGFLFSYYDYYFCITLNFITAAFLIVLSVVLSVSSLALLVKIVWGSHRIPVTRFFVTIALTVVVFIYFGMPFGICWFLLSRIMEFDSIFFNNVYEIIEFLSCVNSCANPIIYFLVGSIRQHRLRWQSLKLLLQRAMQDTPEEESGERGPSQRSGELETV.

Residues 1-33 (MGTTTLAWNINNTAENGSYTEMFSCITKFNTLN) are Extracellular-facing. Asn11 and Asn16 each carry an N-linked (GlcNAc...) asparagine glycan. Residues 34 to 54 (FLTVIIAVVGLAGNGIVLWLL) traverse the membrane as a helical segment. The Cytoplasmic portion of the chain corresponds to 55 to 62 (AFHLHRNA). The helical transmembrane segment at 63–83 (FSVYVLNLAGADFLYLFTQVV) threads the bilayer. Over 84-97 (HSLECVLQLDNNSF) the chain is Extracellular. N-linked (GlcNAc...) asparagine glycosylation is present at Asn94. Residues 98–118 (YILLIVTMFAYLAGLCMIAAI) traverse the membrane as a helical segment. At 119-146 (SAERCLSVMWPIWYHCQRPRHTSAIMCA) the chain is on the cytoplasmic side. Residues 147–167 (LVWVSSLLLSLVVGLGCGFLF) form a helical membrane-spanning segment. Topologically, residues 168-172 (SYYDY) are extracellular. The helical transmembrane segment at 173 to 193 (YFCITLNFITAAFLIVLSVVL) threads the bilayer. Over 194-215 (SVSSLALLVKIVWGSHRIPVTR) the chain is Cytoplasmic. Residues 216–236 (FFVTIALTVVVFIYFGMPFGI) form a helical membrane-spanning segment. The Extracellular segment spans residues 237-257 (CWFLLSRIMEFDSIFFNNVYE). The helical transmembrane segment at 258–278 (IIEFLSCVNSCANPIIYFLVG) threads the bilayer. Over 279–321 (SIRQHRLRWQSLKLLLQRAMQDTPEEESGERGPSQRSGELETV) the chain is Cytoplasmic. A disordered region spans residues 299 to 321 (QDTPEEESGERGPSQRSGELETV).

The protein belongs to the G-protein coupled receptor 1 family. Mas subfamily.

The protein localises to the membrane. In terms of biological role, orphan receptor. Probably involved in the function of nociceptive neurons. May regulate nociceptor function and/or development, including the sensation or modulation of pain. In Mus musculus (Mouse), this protein is Mas-related G-protein coupled receptor member B4 (Mrgprb4).